A 369-amino-acid chain; its full sequence is Erythronate-4-phosphate dehydrogenase (369 aa).

2 residues coordinate substrate: serine 45 and threonine 66. Aspartate 146 is an NAD(+) binding site. Arginine 209 is a catalytic residue. Aspartate 233 is an NAD(+) binding site. Glutamate 238 is a catalytic residue. Histidine 255 acts as the Proton donor in catalysis. NAD(+) is bound at residue glycine 258.

This sequence belongs to the D-isomer specific 2-hydroxyacid dehydrogenase family. PdxB subfamily. In terms of assembly, homodimer.

The protein resides in the cytoplasm. The catalysed reaction is 4-phospho-D-erythronate + NAD(+) = (R)-3-hydroxy-2-oxo-4-phosphooxybutanoate + NADH + H(+). The protein operates within cofactor biosynthesis; pyridoxine 5'-phosphate biosynthesis; pyridoxine 5'-phosphate from D-erythrose 4-phosphate: step 2/5. Its function is as follows. Catalyzes the oxidation of erythronate-4-phosphate to 3-hydroxy-2-oxo-4-phosphonooxybutanoate. The polypeptide is Erythronate-4-phosphate dehydrogenase (Porphyromonas gingivalis (strain ATCC BAA-308 / W83)).